We begin with the raw amino-acid sequence, 139 residues long: Large-conductance mechanosensitive channel (139 aa).

2 consecutive transmembrane segments (helical) span residues 19–39 (VAVI…ADVI) and 81–101 (GNFL…FMVV).

It belongs to the MscL family. As to quaternary structure, homopentamer.

The protein localises to the cell inner membrane. Channel that opens in response to stretch forces in the membrane lipid bilayer. May participate in the regulation of osmotic pressure changes within the cell. The chain is Large-conductance mechanosensitive channel from Nitrobacter hamburgensis (strain DSM 10229 / NCIMB 13809 / X14).